Consider the following 392-residue polypeptide: 5-azacytidine-induced protein 2 (392 aa).

The tract at residues 1 to 197 (MDALVEDDIC…IELQKAKQTD (197 aa)) is homodimerization. Coiled-coil stretches lie at residues 40 to 76 (ALVTAYEDIKKRLKDSEKENSLLKKRIRFLEEKLIAR), 102 to 135 (DRDNLKSKLDKMNKDNSESLKVLNEQLQSKEVEL), and 166 to 196 (DLKIHGLEQELELMRKECSDLKIELQKAKQT). The segment at 216–257 (SDNMQHAYWELKREMSNLHLVTQVQAELLRKLKTSTAIKKAC) is interaction with TBK1 and IKBKE. Residues Ser-318 and Ser-353 each carry the phosphoserine modification. The segment at 345-365 (EDNSWVFPSPPKSSETAFGET) is disordered.

As to quaternary structure, homodimer. Interacts with IKBKE, TBK1 and TICAM1. Interacts with TAX1BP1. Interacts with CALCOCO2. In terms of processing, ubiquitinated via 'Lys-48'-linked polyubiquitination by TRIM38, leading to its degradation.

Its subcellular location is the cytoplasm. Its function is as follows. Adapter protein which binds TBK1 and IKBKE playing a role in antiviral innate immunity. Activates serine/threonine-protein kinase TBK1 and facilitates its oligomerization. Enhances the phosphorylation of NF-kappa-B p65 subunit RELA by TBK1. Promotes TBK1-induced as well as TNF-alpha or PMA-induced activation of NF-kappa-B. Participates in IFNB promoter activation via TICAM1. The protein is 5-azacytidine-induced protein 2 (AZI2) of Pongo abelii (Sumatran orangutan).